The chain runs to 447 residues: MPFLIMLLFVGAIGFQVSFVSRSTTWDMSIAGWVLTGVFILYTAFGLFSNRLPSQMADIIWLYGTATSFSKVVYSVLFFSVTWKALLWIISAIFGDVLIVLLSGDHINLLGRSIIFVGLFFIAEVWLMSVSCARTVKKMKRVYVLVFLLMLGIYSICLYRFFFLQHSSGIWESIARFISGVGLVFDTLSPLYVVVFIGIITVSFMTIAFTSRQVEMKESLVKEAEFWEEFQERQFGSGQIIQKPKTTWWGLQGLNGIWSFLWLELLLFKKYLFFHSIHTVMLSGVFYVVIFMYPEWFYLLFFLIVSAVMLSSYYSGIVRHSQSGTLHLFPGALWKKIIILELTNTVWLYILYCVSITFMAVGNLVYWYIYGLGIYIWFMTIRLFAFTHTNRNDIKLSLPQYYKSFFMALGLSGICLYVIHLLTADWYTLVVVVCIGSLSWCLFYRFR.

Over 1–3 (MPF) the chain is Cytoplasmic. A helical membrane pass occupies residues 4–22 (LIMLLFVGAIGFQVSFVSR). The Extracellular portion of the chain corresponds to 23–29 (STTWDMS). Residues 30–50 (IAGWVLTGVFILYTAFGLFSN) form a helical membrane-spanning segment. Over 51–59 (RLPSQMADI) the chain is Cytoplasmic. The chain crosses the membrane as a helical span at residues 60–80 (IWLYGTATSFSKVVYSVLFFS). The Extracellular segment spans residues 81–85 (VTWKA). Residues 86 to 104 (LLWIISAIFGDVLIVLLSG) traverse the membrane as a helical segment. At 105-113 (DHINLLGRS) the chain is on the cytoplasmic side. Residues 114 to 134 (IIFVGLFFIAEVWLMSVSCAR) traverse the membrane as a helical segment. The Extracellular segment spans residues 135–141 (TVKKMKR). A helical membrane pass occupies residues 142–160 (VYVLVFLLMLGIYSICLYR). Topologically, residues 161–189 (FFFLQHSSGIWESIARFISGVGLVFDTLS) are cytoplasmic. A helical membrane pass occupies residues 190–208 (PLYVVVFIGIITVSFMTIA). Residues 209-247 (FTSRQVEMKESLVKEAEFWEEFQERQFGSGQIIQKPKTT) are Extracellular-facing. The chain crosses the membrane as a helical span at residues 248-268 (WWGLQGLNGIWSFLWLELLLF). The Cytoplasmic segment spans residues 269-297 (KKYLFFHSIHTVMLSGVFYVVIFMYPEWF). A helical transmembrane segment spans residues 298 to 318 (YLLFFLIVSAVMLSSYYSGIV). At 319-341 (RHSQSGTLHLFPGALWKKIIILE) the chain is on the extracellular side. Residues 342-360 (LTNTVWLYILYCVSITFMA) traverse the membrane as a helical segment. At 361–363 (VGN) the chain is on the cytoplasmic side. The chain crosses the membrane as a helical span at residues 364–382 (LVYWYIYGLGIYIWFMTIR). The Extracellular portion of the chain corresponds to 383 to 404 (LFAFTHTNRNDIKLSLPQYYKS). A helical transmembrane segment spans residues 405 to 423 (FFMALGLSGICLYVIHLLT). At 424-426 (ADW) the chain is on the cytoplasmic side. Residues 427–447 (YTLVVVVCIGSLSWCLFYRFR) form a helical membrane-spanning segment.

It localises to the cell membrane. Probably part of the ABC transporter SkfEF involved in the export of the bacteriocin SKF. Probably responsible for the translocation of bacteriocin SkfA across the membrane. The polypeptide is Putative bacteriocin-SkfA transport system permease protein SkfF (Bacillus subtilis (strain 168)).